Consider the following 535-residue polypeptide: Cytochrome P450 monooxygenase claQ (535 aa).

Transmembrane regions (helical) follow at residues 7 to 27 (IGTW…KLVG) and 225 to 245 (YFAI…NLPT). Cys-472 contributes to the heme binding site.

The protein belongs to the cytochrome P450 family. Heme is required as a cofactor.

The protein resides in the membrane. Its pathway is secondary metabolite biosynthesis; terpenoid biosynthesis. Cytochrome P450 monooxygenase; part of the gene cluster that mediates the biosynthesis of clavilactone A, a meroterpenoid that features a unique benzo-fused ten-membered carbocyclic ring unit with an alpha,beta-epoxy-gamma-lactone moiety, forming an intriguing 10/5/3 tricyclic nested skeleton. Cytochrome P450 monooxygenases claO, claP, claQ, claU, and claW are close orthologs, suggesting that a redundant function or pseudogenes are present in the cla cluster. These monoxygenases are not involved in clavilactone A biosynthesis nor its modification. ClaR, ClaS and ClaT are sufficient to produce clavilactone A. The biosynthesis begins with the prenyltransferase claS that transfers geranyl pyrophosphate (GPP) to hydroquinone to produces geranylhydroquinone. The cytochrome P450 monooxygenase claR then catalyzes the diradical coupling reaction between the intramolecular hydroquinone and allyl moieties to form the benzo-fused ten-membered carbocyclic ring unit of wigantol. Finally the cytochrome P450 monooxygenase claT exquisitely and stereoselectively assembles the alpha,beta-epoxy-gamma-lactone moiety, producing clavilactone A via arnebinol A. This Ampulloclitocybe clavipes (Club foot) protein is Cytochrome P450 monooxygenase claQ.